The following is a 122-amino-acid chain: Small ribosomal subunit protein uS13 (122 aa).

The tract at residues 97–122 (PVRGQRTKTNARTRKGPARTVAGKKK) is disordered.

The protein belongs to the universal ribosomal protein uS13 family. Part of the 30S ribosomal subunit. Forms a loose heterodimer with protein S19. Forms two bridges to the 50S subunit in the 70S ribosome.

In terms of biological role, located at the top of the head of the 30S subunit, it contacts several helices of the 16S rRNA. In the 70S ribosome it contacts the 23S rRNA (bridge B1a) and protein L5 of the 50S subunit (bridge B1b), connecting the 2 subunits; these bridges are implicated in subunit movement. Contacts the tRNAs in the A and P-sites. In Geobacter sulfurreducens (strain ATCC 51573 / DSM 12127 / PCA), this protein is Small ribosomal subunit protein uS13.